Reading from the N-terminus, the 410-residue chain is Imidazolonepropionase (410 aa).

Fe(3+) contacts are provided by His71 and His73. Residues His71 and His73 each contribute to the Zn(2+) site. Positions 80, 143, and 175 each coordinate 4-imidazolone-5-propanoate. Residue Tyr143 coordinates N-formimidoyl-L-glutamate. His235 contributes to the Fe(3+) binding site. His235 contributes to the Zn(2+) binding site. Glu238 lines the 4-imidazolone-5-propanoate pocket. Asp309 is a binding site for Fe(3+). Asp309 is a Zn(2+) binding site.

Belongs to the metallo-dependent hydrolases superfamily. HutI family. Zn(2+) is required as a cofactor. It depends on Fe(3+) as a cofactor.

Its subcellular location is the cytoplasm. The enzyme catalyses 4-imidazolone-5-propanoate + H2O = N-formimidoyl-L-glutamate. It participates in amino-acid degradation; L-histidine degradation into L-glutamate; N-formimidoyl-L-glutamate from L-histidine: step 3/3. In terms of biological role, catalyzes the hydrolytic cleavage of the carbon-nitrogen bond in imidazolone-5-propanoate to yield N-formimidoyl-L-glutamate. It is the third step in the universal histidine degradation pathway. The polypeptide is Imidazolonepropionase (Thermoplasma acidophilum (strain ATCC 25905 / DSM 1728 / JCM 9062 / NBRC 15155 / AMRC-C165)).